Reading from the N-terminus, the 283-residue chain is Elongation factor Ts (283 aa).

An involved in Mg(2+) ion dislocation from EF-Tu region spans residues 80–83 (TDFV).

This sequence belongs to the EF-Ts family.

The protein resides in the cytoplasm. Functionally, associates with the EF-Tu.GDP complex and induces the exchange of GDP to GTP. It remains bound to the aminoacyl-tRNA.EF-Tu.GTP complex up to the GTP hydrolysis stage on the ribosome. The polypeptide is Elongation factor Ts (Actinobacillus pleuropneumoniae serotype 5b (strain L20)).